The primary structure comprises 365 residues: Membrane-bound lytic murein transglycosylase A (365 aa).

Residues 1-20 (MKGRWVKYLLMGTVVAMLAA) form the signal peptide. C21 carries N-palmitoyl cysteine lipidation. A lipid anchor (S-diacylglycerol cysteine) is attached at C21.

Its subcellular location is the cell outer membrane. It catalyses the reaction Exolytic cleavage of the (1-&gt;4)-beta-glycosidic linkage between N-acetylmuramic acid (MurNAc) and N-acetylglucosamine (GlcNAc) residues in peptidoglycan, from either the reducing or the non-reducing ends of the peptidoglycan chains, with concomitant formation of a 1,6-anhydrobond in the MurNAc residue.. Its function is as follows. Murein-degrading enzyme. May play a role in recycling of muropeptides during cell elongation and/or cell division. Degrades murein glycan strands and insoluble, high-molecular weight murein sacculi. The sequence is that of Membrane-bound lytic murein transglycosylase A (mltA) from Escherichia coli O157:H7.